A 477-amino-acid polypeptide reads, in one-letter code: 3-isopropylmalate dehydratase large subunit (477 aa).

3 residues coordinate [4Fe-4S] cluster: C352, C413, and C416.

It belongs to the aconitase/IPM isomerase family. LeuC type 1 subfamily. As to quaternary structure, heterodimer of LeuC and LeuD. [4Fe-4S] cluster is required as a cofactor.

The enzyme catalyses (2R,3S)-3-isopropylmalate = (2S)-2-isopropylmalate. It functions in the pathway amino-acid biosynthesis; L-leucine biosynthesis; L-leucine from 3-methyl-2-oxobutanoate: step 2/4. Catalyzes the isomerization between 2-isopropylmalate and 3-isopropylmalate, via the formation of 2-isopropylmaleate. The sequence is that of 3-isopropylmalate dehydratase large subunit from Pseudomonas entomophila (strain L48).